The chain runs to 1133 residues: Protein TPR3 (1133 aa).

The 33-residue stretch at 4–36 folds into the LisH domain; sequence LSRELVFLILQFLDEEKFKETVHKLEQESGFYF. The region spanning 34–92 is the CTLH domain; sequence FYFNMKYFEDEVINGNWDEVERYLGGFTKVDDNRYSMKIFFEIRKQKYLEALDKHDRSK. Positions 287 to 307 are disordered; that stretch reads PTTANPSMDYPSGDSDHVSKR. WD repeat units lie at residues 348–388, 410–449, 455–496, 499–540, 543–586, 590–629, 634–673, 771–810, 837–875, 878–918, 921–960, and 1014–1053; these read SQGS…RLVL, DPTV…DIRQ, AHVG…KQFT, GHEA…SRVD, APGH…VKRT, FRKR…LLTT, GGLP…RLLR, MRTS…RNSS, NPEE…TMTT, PPPP…VKSK, GHSK…KLKS, and ENSS…LQCR. The interval 1099–1133 is disordered; that stretch reads ESERKWGNPPPAENGSTSALSTPPNGASSSDQPER. Residues 1112–1133 are compositionally biased toward polar residues; the sequence is NGSTSALSTPPNGASSSDQPER.

As to quaternary structure, tetramer. Interacts with D53. Interacts with MODD and HDAC1. Interacts with WOX1. Interacts with MOF1. Expressed in panicles, stems, leaves, spikelets and seed endosperm.

Functionally, probable downstream regulator of strigolactones signaling. Functions in a complex with MODD and HDAC1 to down-regulate the histone acetylation level at BZIP46 target genes. BZIP46 is a positive regulator of abscisic acid (ABA) signaling and drought stress tolerance. This chain is Protein TPR3, found in Oryza sativa subsp. japonica (Rice).